The chain runs to 84 residues: NAD(P)H-quinone oxidoreductase subunit O (84 aa).

Belongs to the complex I NdhO subunit family. NDH-1 can be composed of about 15 different subunits; different subcomplexes with different compositions have been identified which probably have different functions.

Its subcellular location is the cellular thylakoid membrane. It carries out the reaction a plastoquinone + NADH + (n+1) H(+)(in) = a plastoquinol + NAD(+) + n H(+)(out). The enzyme catalyses a plastoquinone + NADPH + (n+1) H(+)(in) = a plastoquinol + NADP(+) + n H(+)(out). NDH-1 shuttles electrons from an unknown electron donor, via FMN and iron-sulfur (Fe-S) centers, to quinones in the respiratory and/or the photosynthetic chain. The immediate electron acceptor for the enzyme in this species is believed to be plastoquinone. Couples the redox reaction to proton translocation, and thus conserves the redox energy in a proton gradient. Cyanobacterial NDH-1 also plays a role in inorganic carbon-concentration. The sequence is that of NAD(P)H-quinone oxidoreductase subunit O from Synechococcus sp. (strain CC9605).